Reading from the N-terminus, the 238-residue chain is Ubiquinone biosynthesis O-methyltransferase (238 aa).

S-adenosyl-L-methionine is bound by residues Arg-38, Gly-57, Asp-78, and Leu-124.

The protein belongs to the methyltransferase superfamily. UbiG/COQ3 family.

The enzyme catalyses a 3-demethylubiquinol + S-adenosyl-L-methionine = a ubiquinol + S-adenosyl-L-homocysteine + H(+). It carries out the reaction a 3-(all-trans-polyprenyl)benzene-1,2-diol + S-adenosyl-L-methionine = a 2-methoxy-6-(all-trans-polyprenyl)phenol + S-adenosyl-L-homocysteine + H(+). It functions in the pathway cofactor biosynthesis; ubiquinone biosynthesis. Its function is as follows. O-methyltransferase that catalyzes the 2 O-methylation steps in the ubiquinone biosynthetic pathway. The polypeptide is Ubiquinone biosynthesis O-methyltransferase (Marinobacter nauticus (strain ATCC 700491 / DSM 11845 / VT8) (Marinobacter aquaeolei)).